We begin with the raw amino-acid sequence, 194 residues long: Dof zinc finger protein DOF1.7 (194 aa).

A Dof-type zinc finger spans residues 33–87 (LKCPRCDSPNTKFCYYNNYNLSQPRHFCKNCRRYWTKGGALRNIPVGGGTRKSNK). 4 residues coordinate Zn(2+): cysteine 35, cysteine 38, cysteine 60, and cysteine 63. A disordered region spans residues 74–125 (RNIPVGGGTRKSNKRSGSSPSSNLKNQTVAEKPDHHGSGSEEKEERVSGQEM). Low complexity predominate over residues 88–99 (RSGSSPSSNLKN). Over residues 104 to 121 (EKPDHHGSGSEEKEERVS) the composition is skewed to basic and acidic residues.

The protein resides in the nucleus. Transcription factor that binds specifically to a 5'-AA[AG]G-3' consensus core sequence. The sequence is that of Dof zinc finger protein DOF1.7 (DOF1.7) from Arabidopsis thaliana (Mouse-ear cress).